The sequence spans 697 residues: Glycine--tRNA ligase beta subunit (697 aa).

The protein belongs to the class-II aminoacyl-tRNA synthetase family. Tetramer of two alpha and two beta subunits.

It is found in the cytoplasm. The enzyme catalyses tRNA(Gly) + glycine + ATP = glycyl-tRNA(Gly) + AMP + diphosphate. This chain is Glycine--tRNA ligase beta subunit, found in Cereibacter sphaeroides (strain ATCC 17023 / DSM 158 / JCM 6121 / CCUG 31486 / LMG 2827 / NBRC 12203 / NCIMB 8253 / ATH 2.4.1.) (Rhodobacter sphaeroides).